The chain runs to 786 residues: Ribosome biogenesis protein BOP1 homolog (786 aa).

Residues Met1–Val11 show a composition bias toward basic residues. The tract at residues Met1–Ile161 is disordered. The segment covering Ile17–Gln26 has biased composition (polar residues). Composition is skewed to acidic residues over residues Glu44 to Asp53, Thr60 to Gly72, and Ser82 to Lys114. The segment covering Lys122–Ile135 has biased composition (polar residues). Basic and acidic residues predominate over residues Pro141–Tyr150. Positions Glu151 to Asp160 are enriched in acidic residues. WD repeat units lie at residues Gly447–Glu488, Asn490–Val528, Thr572–Pro614, Lys617–Lys655, Thr658–Gln697, Leu701–Gln740, and Arg756–Thr786.

This sequence belongs to the WD repeat BOP1/ERB1 family.

It localises to the nucleus. Its subcellular location is the nucleolus. The protein resides in the nucleoplasm. Functionally, required for maturation of ribosomal RNAs and formation of the large ribosomal subunit. The chain is Ribosome biogenesis protein BOP1 homolog from Drosophila grimshawi (Hawaiian fruit fly).